Reading from the N-terminus, the 397-residue chain is Acetate kinase 1 (397 aa).

Residue N8 coordinates Mg(2+). Residue K15 participates in ATP binding. A substrate-binding site is contributed by R89. The active-site Proton donor/acceptor is D146. ATP-binding positions include 206–210, 281–283, and 329–333; these read HLGNG, DLR, and GIGEN. E382 contacts Mg(2+).

The protein belongs to the acetokinase family. In terms of assembly, homodimer. The cofactor is Mg(2+). It depends on Mn(2+) as a cofactor.

The protein localises to the cytoplasm. The catalysed reaction is acetate + ATP = acetyl phosphate + ADP. The protein operates within metabolic intermediate biosynthesis; acetyl-CoA biosynthesis; acetyl-CoA from acetate: step 1/2. Functionally, catalyzes the formation of acetyl phosphate from acetate and ATP. Can also catalyze the reverse reaction. This chain is Acetate kinase 1, found in Listeria innocua serovar 6a (strain ATCC BAA-680 / CLIP 11262).